The sequence spans 141 residues: Hemoglobin subunit alpha-A (141 aa).

Residues 1-141 (VLSAADKTNV…VGTVLTAKYR (141 aa)) enclose the Globin domain. Residue histidine 58 participates in O2 binding. Position 87 (histidine 87) interacts with heme b.

This sequence belongs to the globin family. Heterotetramer of two alpha chains and two beta chains. Red blood cells.

Functionally, involved in oxygen transport from the lung to the various peripheral tissues. This is Hemoglobin subunit alpha-A (HBAA) from Turdus merula (Common blackbird).